Reading from the N-terminus, the 153-residue chain is ORM1-like protein 3 (153 aa).

Positions 1–17 are important for ceramide level-sensing; sequence MNVGTAHSEVNPNTRVM. Residues 1–21 are Cytoplasmic-facing; the sequence is MNVGTAHSEVNPNTRVMNSRG. 2 helical membrane passes run 22-42 and 43-63; these read IWLS…SIPF and VSVP…MYIF. Topologically, residues 64–94 are cytoplasmic; that stretch reads LHTVKGTPFETPDQGKARLLTHWEQMDYGVQ. Residues 95–117 form a helical membrane-spanning segment; it reads FTASRKFLTITPIVLYFLTSFYT. Residues 118–121 lie on the Extracellular side of the membrane; sequence KYDQ. The helical transmembrane segment at 122-142 threads the bilayer; it reads VHFILNTVSLMTVLIPKLPQL. Position 137 is a hydroxyproline (Pro137). The Cytoplasmic portion of the chain corresponds to 143–153; that stretch reads HGVRIFGINKY.

It belongs to the ORM family. As to quaternary structure, ceramide-sensitive subunit of the serine palmitoyltransferase (SPT) complex, which is also composed of SPTLC1, SPTLC2/3 and SPTSSA/B. In terms of processing, when hydroxylated at Pro-137, ubiquitinated via 'Lys-48'-linkage, leading to proteasomal degradation. In endothelial cells, ORMDL3 proteasomal degradation is controlled by the sphingosine 1-phosphate receptor signaling pathway.

Its subcellular location is the endoplasmic reticulum membrane. Plays an essential role in the homeostatic regulation of sphingolipid de novo biosynthesis by modulating the activity of the serine palmitoyltransferase (SPT) in response to ceramide levels. When complexed to SPT, the binding of ceramides to its N-terminus stabilizes a conformation that block SPT substrate entry, hence preventing SPT catalytic activity. Through this mechanism, maintains ceramide levels at sufficient concentrations for the production of complex sphingolipids, but which prevents the accumulation of ceramides to levels that trigger apoptosis. The chain is ORM1-like protein 3 (Ormdl3) from Mus musculus (Mouse).